A 305-amino-acid chain; its full sequence is MRFLFYMLLACSAVVAGEQAAAAKELRLNSFVHRSFDAHIHAQRLLRDRRSVDEERGLPTVIEKTKTLFSTKVTDKTLQRWAANKKSPQHALIRLDLDNAGKDLFTKAKFADWVSFMTKRNPQNAEAAMLSALMTRYSDDVLSGMLIAAKKAPDTKTIATNLQIQQLRGWMKKGKTADDVFNLFNLKGKATSLDDLVSDGQFAPWVTYVTALNKGDPKKTNMMVVKTLTTYNKKTHKGVYDMLSASKNKQLAADLQRGQFDNWLANNVQFYDVSAMVGAKGTPRGSPQRLFVKDYVAAYNKKHQL.

The signal sequence occupies residues 1-16 (MRFLFYMLLACSAVVA). The short motif at 44–56 (RLLRDRRSVDEER) is the RxLR-dEER element.

Belongs to the RxLR effector family.

Its subcellular location is the secreted. The protein localises to the host nucleus. It localises to the host nucleolus. In terms of biological role, effector that enhances P.infestans colonization of Nicotiana benthamiana leaves. This chain is RxLR effector protein PexRD25, found in Phytophthora infestans (strain T30-4) (Potato late blight agent).